We begin with the raw amino-acid sequence, 479 residues long: Odorant receptor coreceptor (479 aa).

Topologically, residues Met-1–Tyr-43 are cytoplasmic. The chain crosses the membrane as a helical span at residues Ser-44–Met-64. At Asn-65–Thr-73 the chain is on the extracellular side. Residues Ala-74–Val-94 traverse the membrane as a helical segment. Topologically, residues Asn-95–Leu-133 are cytoplasmic. Residues Leu-134 to Phe-154 form a helical membrane-spanning segment. Residues Gly-155–Ala-187 lie on the Extracellular side of the membrane. An N-linked (GlcNAc...) asparagine glycan is attached at Asn-167. A helical transmembrane segment spans residues Met-188 to Met-208. The Cytoplasmic segment spans residues Cys-209–Leu-344. A helical membrane pass occupies residues Val-345 to Ile-365. Residues Lys-366–Tyr-383 lie on the Extracellular side of the membrane. A helical transmembrane segment spans residues Gly-384–Phe-404. Residues Gly-405–Thr-455 lie on the Cytoplasmic side of the membrane. The helical transmembrane segment at Val-456 to Val-476 threads the bilayer. Topologically, residues Gln-477 to Lys-479 are extracellular.

It belongs to the insect chemoreceptor superfamily. Heteromeric odorant receptor channel (TC 1.A.69) family. Orco subfamily. In terms of assembly, heterodimer with conventional odorant receptors (ORs). Expressed in female antenna, maxillary palp and proboscis. Not detected in male tissues.

It localises to the cell membrane. In terms of biological role, odorant coreceptor which complexes with conventional odorant receptors (ORs) to form odorant-sensing units, providing sensitive and prolonged odorant signaling and calcium permeability. Orco is a universal and integral part of the functional odorant receptor, involved in the dendritic localization of other olfactory receptors. Required for detecting a host for blood feeding. Plays a key role in preferred attraction of females for humans over non-human hosts for blood feeding. The protein is Odorant receptor coreceptor of Aedes albopictus (Asian tiger mosquito).